Reading from the N-terminus, the 315-residue chain is Secreted mono- and diacylglycerol lipase LIP2 (315 aa).

The signal sequence occupies residues 1–21; the sequence is MACFRVILYLSVIFFVQCVFA. A disulfide bridge connects residues cysteine 68 and cysteine 308. A glycan (N-linked (GlcNAc...) asparagine) is linked at asparagine 74. The Nucleophile role is filled by serine 182. The active site involves aspartate 240. An N-linked (GlcNAc...) asparagine glycan is attached at asparagine 265. Histidine 292 is a catalytic residue.

It belongs to the AB hydrolase superfamily. Lipase family. Class 3 subfamily.

The protein localises to the secreted. The catalysed reaction is a monoacylglycerol + H2O = glycerol + a fatty acid + H(+). It carries out the reaction a diacylglycerol + H2O = a monoacylglycerol + a fatty acid + H(+). In terms of biological role, secreted lipase involved in Dandruff and seborrheic dermatitis (D/SD) probably via lipase-mediated breakdown of sebaceous lipids and release of irritating free fatty acids. Shows activity against monoglyceride and diglyceride substrates and generates free oleic acid from the substrates mono- and diolein. Able to cleave the oleic acid from both the 1 and the 2 position of the glycerol backbone as 1,2 isomers of diolein were converted into oleic acid and glycerol. Due to an absence of fatty acid synthase genes in Malassezia species, secretory lipases are essential for the yeast to generate free fatty acids from degradation of sebum and assimilate them as lipid sources for growth. Plays an essential role at the pathogen-host interface during disease progression. Also performs the reverse reaction to build diacylglycerols from monoacylglycerols. The protein is Secreted mono- and diacylglycerol lipase LIP2 of Malassezia restricta (strain ATCC 96810 / NBRC 103918 / CBS 7877) (Seborrheic dermatitis infection agent).